Reading from the N-terminus, the 323-residue chain is Pyruvate dehydrogenase E1 component subunit beta (323 aa).

Glu-60 is a thiamine diphosphate binding site. Residues Ile-113, Ala-161, Ile-162, Asp-164, and Asn-166 each coordinate K(+).

In terms of assembly, heterodimer of an alpha and a beta chain. Thiamine diphosphate is required as a cofactor.

The protein resides in the plastid. Its subcellular location is the chloroplast. The catalysed reaction is N(6)-[(R)-lipoyl]-L-lysyl-[protein] + pyruvate + H(+) = N(6)-[(R)-S(8)-acetyldihydrolipoyl]-L-lysyl-[protein] + CO2. Functionally, the pyruvate dehydrogenase complex catalyzes the overall conversion of pyruvate to acetyl-CoA and CO(2). It contains multiple copies of three enzymatic components: pyruvate dehydrogenase (E1), dihydrolipoamide acetyltransferase (E2) and lipoamide dehydrogenase (E3). The polypeptide is Pyruvate dehydrogenase E1 component subunit beta (pdhB) (Gracilaria tenuistipitata var. liui (Red alga)).